The chain runs to 555 residues: CTL-like protein DDB_G0274487 (555 aa).

Over residues 1–17 (MGIEDNSQQPNTGSPYG) the composition is skewed to polar residues. Residues 1–101 (MGIEDNSQQP…NLNKANDRES (101 aa)) form a disordered region. Positions 19-63 (SPPSQYNPYGQQPPQQQQYNPYGEQQQQPQQQQQYGYQPQFQPTY) are enriched in low complexity. Residues 79–90 (PFPPQQQQPPPI) show a composition bias toward pro residues. N-linked (GlcNAc...) asparagine glycosylation is present at Asn116. The helical transmembrane segment at 138–158 (IWFSILFGLNFGLLIVVSASA) threads the bilayer. Asn174 carries N-linked (GlcNAc...) asparagine glycosylation. 10 helical membrane-spanning segments follow: residues 182-202 (FLFA…WAWL), 210-230 (ESLI…YCVF), 231-251 (FFVW…FFII), 284-304 (AGYV…SAFA), 313-333 (AIQT…FHVI), 340-360 (TVSG…VGMP), 372-392 (LTTS…IETL), 405-425 (VVVK…SSIV), 472-492 (IAIG…LISI), and 493-513 (PFDM…LVII).

It belongs to the CTL (choline transporter-like) family.

It is found in the membrane. This Dictyostelium discoideum (Social amoeba) protein is CTL-like protein DDB_G0274487.